Reading from the N-terminus, the 336-residue chain is F420-dependent glucose-6-phosphate dehydrogenase (336 aa).

Asp39 contributes to the coenzyme F420-(gamma-Glu)n binding site. Catalysis depends on His40, which acts as the Proton donor. Residues Thr76 and 107–108 contribute to the coenzyme F420-(gamma-Glu)n site; that span reads TG. Catalysis depends on Glu109, which acts as the Proton acceptor. Coenzyme F420-(gamma-Glu)n-binding positions include Asn112, 177–178, and 180–181; these read GG and EV. Residues Thr195, Lys198, Lys259, and Arg283 each contribute to the substrate site.

Belongs to the F420-dependent glucose-6-phosphate dehydrogenase family. In terms of assembly, homodimer.

It carries out the reaction oxidized coenzyme F420-(gamma-L-Glu)(n) + D-glucose 6-phosphate + H(+) = 6-phospho-D-glucono-1,5-lactone + reduced coenzyme F420-(gamma-L-Glu)(n). Its function is as follows. Catalyzes the coenzyme F420-dependent oxidation of glucose 6-phosphate (G6P) to 6-phosphogluconolactone. Appears to have a role in resistance to oxidative stress, via its consumption of G6P that serves as a source of reducing power to combat oxidative stress in mycobacteria. The sequence is that of F420-dependent glucose-6-phosphate dehydrogenase from Mycobacterium leprae (strain Br4923).